A 421-amino-acid chain; its full sequence is Gamma-glutamyl phosphate reductase (421 aa).

This sequence belongs to the gamma-glutamyl phosphate reductase family.

It localises to the cytoplasm. The enzyme catalyses L-glutamate 5-semialdehyde + phosphate + NADP(+) = L-glutamyl 5-phosphate + NADPH + H(+). It functions in the pathway amino-acid biosynthesis; L-proline biosynthesis; L-glutamate 5-semialdehyde from L-glutamate: step 2/2. Its function is as follows. Catalyzes the NADPH-dependent reduction of L-glutamate 5-phosphate into L-glutamate 5-semialdehyde and phosphate. The product spontaneously undergoes cyclization to form 1-pyrroline-5-carboxylate. The chain is Gamma-glutamyl phosphate reductase from Bordetella petrii (strain ATCC BAA-461 / DSM 12804 / CCUG 43448).